The sequence spans 310 residues: Choline trimethylamine-lyase activating enzyme (310 aa).

Residues 17–304 form the Radical SAM core domain; sequence YDGPGVRTLV…EACIRKYDFP (288 aa). The [4Fe-4S] cluster site is built by Cys31, Cys35, Cys38, Cys57, Cys60, Cys63, and Cys99. 37–39 is an S-adenosyl-L-methionine binding site; that stretch reads WCS. 2 4Fe-4S ferredoxin-type domains span residues 48-77 and 79-109; these read YQVL…ISAS and LRHG…VVGE. S-adenosyl-L-methionine is bound by residues Gly139, 188–190, and His264; that span reads DVK.

It belongs to the organic radical-activating enzymes family. As to quaternary structure, monomer. It depends on [4Fe-4S] cluster as a cofactor.

It carries out the reaction glycyl-[protein] + reduced [flavodoxin] + S-adenosyl-L-methionine = glycin-2-yl radical-[protein] + semiquinone [flavodoxin] + 5'-deoxyadenosine + L-methionine + H(+). It participates in amine and polyamine metabolism; choline degradation. In terms of biological role, catalyzes activation of the choline trimethylamine-lyase CutC under anaerobic conditions by generation of an organic free radical on a glycine residue, via a homolytic cleavage of S-adenosyl-L-methionine (SAM). Is involved in the anaerobic choline utilization pathway that allows D.alaskensis to grow on choline as a source of carbon and energy. In Oleidesulfovibrio alaskensis (strain ATCC BAA-1058 / DSM 17464 / G20) (Desulfovibrio alaskensis), this protein is Choline trimethylamine-lyase activating enzyme.